We begin with the raw amino-acid sequence, 201 residues long: dTTP/UTP pyrophosphatase (201 aa).

Asp-81 serves as the catalytic Proton acceptor.

It belongs to the Maf family. YhdE subfamily. A divalent metal cation is required as a cofactor.

The protein resides in the cytoplasm. The enzyme catalyses dTTP + H2O = dTMP + diphosphate + H(+). The catalysed reaction is UTP + H2O = UMP + diphosphate + H(+). In terms of biological role, nucleoside triphosphate pyrophosphatase that hydrolyzes dTTP and UTP. May have a dual role in cell division arrest and in preventing the incorporation of modified nucleotides into cellular nucleic acids. The chain is dTTP/UTP pyrophosphatase from Dechloromonas aromatica (strain RCB).